We begin with the raw amino-acid sequence, 387 residues long: Putative gustatory receptor 22d (387 aa).

At 1-43 (MFRPRCGLRQKFVYVILKSILYSSWLLGIFPFKYEPKKRRLRR) the chain is on the cytoplasmic side. The chain crosses the membrane as a helical span at residues 44-64 (SMWLILFGVVISSSLLILMVK). Residues 65 to 82 (QSAEDREHGIMLDVFQRN) are Extracellular-facing. A helical membrane pass occupies residues 83-103 (ALLYQISSLMGVVGVVSICTV). Topologically, residues 104 to 142 (HLRTLWRSKHLEEIYNGLMLLEAKYFCSNAVECPAFDGY) are cytoplasmic. The helical transmembrane segment at 143–163 (VIQKGVVIVVGLLAPWMVHFG) threads the bilayer. The Extracellular segment spans residues 164 to 184 (MPDSKLPVLNVLVVSMVKLGT). Residues 185-205 (LLLALHYHLGVVIIYRFVWLI) traverse the membrane as a helical segment. Residues 206–252 (NRELLSLVCSLRGNHKGSSSRVRFLLKLYNKLVNLYSKLADCYDCQT) lie on the Cytoplasmic side of the membrane. Residues 253 to 273 (VLMMAIFLAANIIVCFYMIVY) form a helical membrane-spanning segment. At 274 to 281 (RISLSKMS) the chain is on the extracellular side. Residues 282 to 302 (FFVMLIMFPLAIANNFMDFWL) traverse the membrane as a helical segment. Residues 303–363 (SMKVCDLLQK…HCGLFHVNRE (61 aa)) are Cytoplasmic-facing. Residues 364-384 (MGFKMFVASVLYLLYLVQFDY) traverse the membrane as a helical segment. The Extracellular segment spans residues 385 to 387 (MNL).

This sequence belongs to the insect chemoreceptor superfamily. Gustatory receptor (GR) family. Gr22e subfamily. Expressed in neurons of the dorsal pharyngeal sense organs of larvae.

The protein resides in the cell membrane. Its function is as follows. Probable gustatory receptor which mediates acceptance or avoidance behavior, depending on its substrates. This chain is Putative gustatory receptor 22d, found in Drosophila melanogaster (Fruit fly).